The sequence spans 110 residues: UPF0339 protein YegP (110 aa).

A run of 2 repeats spans residues 10–58 (SSDN…RYEK) and 61–109 (ASNG…VKDN).

It belongs to the UPF0339 family. Duplicated subfamily.

This chain is UPF0339 protein YegP (yegP), found in Escherichia coli (strain K12).